A 428-amino-acid chain; its full sequence is Glutamate-1-semialdehyde 2,1-aminomutase (428 aa).

An N6-(pyridoxal phosphate)lysine modification is found at Lys-265.

This sequence belongs to the class-III pyridoxal-phosphate-dependent aminotransferase family. HemL subfamily. Homodimer. The cofactor is pyridoxal 5'-phosphate.

The protein resides in the cytoplasm. The catalysed reaction is (S)-4-amino-5-oxopentanoate = 5-aminolevulinate. It participates in porphyrin-containing compound metabolism; protoporphyrin-IX biosynthesis; 5-aminolevulinate from L-glutamyl-tRNA(Glu): step 2/2. The polypeptide is Glutamate-1-semialdehyde 2,1-aminomutase (Shewanella frigidimarina (strain NCIMB 400)).